Here is a 518-residue protein sequence, read N- to C-terminus: Glutamate--cysteine ligase (518 aa).

It belongs to the glutamate--cysteine ligase type 1 family. Type 1 subfamily.

It carries out the reaction L-cysteine + L-glutamate + ATP = gamma-L-glutamyl-L-cysteine + ADP + phosphate + H(+). The protein operates within sulfur metabolism; glutathione biosynthesis; glutathione from L-cysteine and L-glutamate: step 1/2. This Shigella sonnei (strain Ss046) protein is Glutamate--cysteine ligase.